A 622-amino-acid chain; its full sequence is Cilia- and flagella-associated protein 206 (622 aa).

A disordered region spans residues 570–592 (SQVYPPKDTSTQSMREDSTGVPR).

It belongs to the CFAP206 family.

Its subcellular location is the cytoplasm. It localises to the cytoskeleton. The protein resides in the cilium axoneme. It is found in the cilium basal body. In terms of biological role, essential for sperm motility and is involved in the regulation of the beating frequency of motile cilia on the epithelial cells of the respiratory tract. Required for the establishment of radial spokes in sperm flagella. This Homo sapiens (Human) protein is Cilia- and flagella-associated protein 206.